A 182-amino-acid polypeptide reads, in one-letter code: Orotate phosphoribosyltransferase (182 aa).

5-phospho-alpha-D-ribose 1-diphosphate is bound by residues arginine 96, lysine 97, lysine 100, histidine 102, and 122–130 (EDTSTTGGS). Orotate-binding residues include threonine 126 and arginine 154.

The protein belongs to the purine/pyrimidine phosphoribosyltransferase family. PyrE subfamily. As to quaternary structure, homodimer. Mg(2+) serves as cofactor.

It carries out the reaction orotidine 5'-phosphate + diphosphate = orotate + 5-phospho-alpha-D-ribose 1-diphosphate. The protein operates within pyrimidine metabolism; UMP biosynthesis via de novo pathway; UMP from orotate: step 1/2. Its function is as follows. Catalyzes the transfer of a ribosyl phosphate group from 5-phosphoribose 1-diphosphate to orotate, leading to the formation of orotidine monophosphate (OMP). This is Orotate phosphoribosyltransferase from Streptomyces coelicolor (strain ATCC BAA-471 / A3(2) / M145).